We begin with the raw amino-acid sequence, 460 residues long: Argininosuccinate lyase (460 aa).

This sequence belongs to the lyase 1 family. Argininosuccinate lyase subfamily.

Its subcellular location is the cytoplasm. It carries out the reaction 2-(N(omega)-L-arginino)succinate = fumarate + L-arginine. It participates in amino-acid biosynthesis; L-arginine biosynthesis; L-arginine from L-ornithine and carbamoyl phosphate: step 3/3. This Alteromonas mediterranea (strain DSM 17117 / CIP 110805 / LMG 28347 / Deep ecotype) protein is Argininosuccinate lyase.